The sequence spans 688 residues: Glycine--tRNA ligase beta subunit (688 aa).

Belongs to the class-II aminoacyl-tRNA synthetase family. In terms of assembly, tetramer of two alpha and two beta subunits.

The protein resides in the cytoplasm. The enzyme catalyses tRNA(Gly) + glycine + ATP = glycyl-tRNA(Gly) + AMP + diphosphate. The chain is Glycine--tRNA ligase beta subunit from Haemophilus influenzae (strain PittEE).